The primary structure comprises 206 residues: Large ribosomal subunit protein uL4 (206 aa).

Positions 48–59 (THDTKTRSEVRG) are enriched in basic and acidic residues. The segment at 48–77 (THDTKTRSEVRGGGRKPWRQKGTGRARHGS) is disordered. Residues 60–77 (GGRKPWRQKGTGRARHGS) show a composition bias toward basic residues.

Belongs to the universal ribosomal protein uL4 family. As to quaternary structure, part of the 50S ribosomal subunit.

Its function is as follows. One of the primary rRNA binding proteins, this protein initially binds near the 5'-end of the 23S rRNA. It is important during the early stages of 50S assembly. It makes multiple contacts with different domains of the 23S rRNA in the assembled 50S subunit and ribosome. In terms of biological role, forms part of the polypeptide exit tunnel. This chain is Large ribosomal subunit protein uL4, found in Pelotomaculum thermopropionicum (strain DSM 13744 / JCM 10971 / SI).